A 385-amino-acid chain; its full sequence is Uroporphyrinogen decarboxylase (385 aa).

Substrate is bound by residues 53 to 57 (RQAGR), Asp-102, Tyr-179, Ser-234, and His-363.

It belongs to the uroporphyrinogen decarboxylase family. In terms of assembly, homodimer.

The protein localises to the cytoplasm. It catalyses the reaction uroporphyrinogen III + 4 H(+) = coproporphyrinogen III + 4 CO2. It participates in porphyrin-containing compound metabolism; protoporphyrin-IX biosynthesis; coproporphyrinogen-III from 5-aminolevulinate: step 4/4. Its function is as follows. Catalyzes the decarboxylation of four acetate groups of uroporphyrinogen-III to yield coproporphyrinogen-III. The polypeptide is Uroporphyrinogen decarboxylase (Tropheryma whipplei (strain TW08/27) (Whipple's bacillus)).